Consider the following 219-residue polypeptide: Putative NAD(P)H nitroreductase SSP0379 (219 aa).

Belongs to the nitroreductase family. It depends on FMN as a cofactor.

This Staphylococcus saprophyticus subsp. saprophyticus (strain ATCC 15305 / DSM 20229 / NCIMB 8711 / NCTC 7292 / S-41) protein is Putative NAD(P)H nitroreductase SSP0379.